A 90-amino-acid polypeptide reads, in one-letter code: Molybdopterin synthase sulfur carrier subunit (90 aa).

A 1-thioglycine; alternate modification is found at glycine 90. The residue at position 90 (glycine 90) is a Glycyl adenylate; alternate.

The protein belongs to the MoaD family. MOCS2A subfamily. Heterotetramer; composed of 2 small (Mocs2A) and 2 large (Mocs2B) subunits. Post-translationally, C-terminal thiocarboxylation occurs in 2 steps, it is first acyl-adenylated (-COAMP) via the hesA/moeB/thiF part of MOCS3, then thiocarboxylated (-COSH) via the rhodanese domain of MOCS3.

The protein localises to the cytoplasm. Its pathway is cofactor biosynthesis; molybdopterin biosynthesis. In terms of biological role, acts as a sulfur carrier required for molybdopterin biosynthesis. Component of the molybdopterin synthase complex that catalyzes the conversion of precursor Z into molybdopterin by mediating the incorporation of 2 sulfur atoms into precursor Z to generate a dithiolene group. In the complex, serves as sulfur donor by being thiocarboxylated (-COSH) at its C-terminus by MOCS3. After interaction with Mocs2B, the sulfur is then transferred to precursor Z to form molybdopterin. Involved during biosynthesis of the molybdenum cofactor. This Drosophila melanogaster (Fruit fly) protein is Molybdopterin synthase sulfur carrier subunit.